Consider the following 205-residue polypeptide: Coenzyme Q-binding protein COQ10, mitochondrial (205 aa).

Belongs to the COQ10 family. As to quaternary structure, interacts with coenzyme Q.

It is found in the mitochondrion inner membrane. Required for the function of coenzyme Q in the respiratory chain. May serve as a chaperone or may be involved in the transport of Q6 from its site of synthesis to the catalytic sites of the respiratory complexes. The sequence is that of Coenzyme Q-binding protein COQ10, mitochondrial (coq10-1) from Dictyostelium discoideum (Social amoeba).